We begin with the raw amino-acid sequence, 149 residues long: Thioredoxin-like protein 4B (149 aa).

Belongs to the DIM1 family. As to quaternary structure, homodimer. Interacts with the U5-102 kDa protein subunit of the spliceosome.

It is found in the nucleus. Essential role in pre-mRNA splicing. Required in cell cycle progression for S/G(2) transition. In Homo sapiens (Human), this protein is Thioredoxin-like protein 4B (TXNL4B).